The following is a 112-amino-acid chain: Probable prefoldin subunit 1 (112 aa).

It belongs to the prefoldin subunit beta family. As to quaternary structure, heterohexamer of two PFD-alpha type and four PFD-beta type subunits.

Its function is as follows. Binds specifically to cytosolic chaperonin (c-CPN) and transfers target proteins to it. Binds to nascent polypeptide chain and promotes folding in an environment in which there are many competing pathways for nonnative proteins. The polypeptide is Probable prefoldin subunit 1 (Schizosaccharomyces pombe (strain 972 / ATCC 24843) (Fission yeast)).